The chain runs to 460 residues: Elongation factor 1-alpha (460 aa).

Gly2 carries the n,N,N-trimethylglycine modification. Lys3 is modified (N6,N6-dimethyllysine; alternate). Lys3 is subject to N6-methyllysine; alternate. Residues Lys6–Thr241 form the tr-type G domain. The G1 stretch occupies residues Gly15 to Ser22. Gly15–Ser22 contributes to the GTP binding site. At Lys31 the chain carries N6-methyllysine. Positions Gly71–Asp75 are G2. Residue Lys80 is modified to N6,N6,N6-trimethyllysine. Residues Asp92 to Gly95 are G3. GTP is bound by residues Asp92–His96 and Asn154–Asp157. A G4 region spans residues Asn154–Asp157. Residues Ser193 to Phe195 form a G5 region. The residue at position 317 (Lys317) is an N6,N6-dimethyllysine; alternate. Lys317 bears the N6-methyllysine; alternate mark. Lys391 carries the post-translational modification N6-methyllysine.

This sequence belongs to the TRAFAC class translation factor GTPase superfamily. Classic translation factor GTPase family. EF-Tu/EF-1A subfamily.

It localises to the cytoplasm. Functionally, this protein promotes the GTP-dependent binding of aminoacyl-tRNA to the A-site of ribosomes during protein biosynthesis. The sequence is that of Elongation factor 1-alpha (tef1) from Aspergillus oryzae (strain ATCC 42149 / RIB 40) (Yellow koji mold).